Here is a 177-residue protein sequence, read N- to C-terminus: Ribulose bisphosphate carboxylase small subunit, chloroplastic (177 aa).

The transit peptide at 1–55 (MASLMSNAAVVTASTAAQANMVAPFSGLKSTSAFPVSRKSNVDITSLATNGGRVN) directs the protein to the chloroplast.

This sequence belongs to the RuBisCO small chain family. As to quaternary structure, heterohexadecamer of 8 large and 8 small subunits.

It localises to the plastid. The protein localises to the chloroplast. Functionally, ruBisCO catalyzes two reactions: the carboxylation of D-ribulose 1,5-bisphosphate, the primary event in carbon dioxide fixation, as well as the oxidative fragmentation of the pentose substrate. Both reactions occur simultaneously and in competition at the same active site. Although the small subunit is not catalytic it is essential for maximal activity. This is Ribulose bisphosphate carboxylase small subunit, chloroplastic from Silene latifolia subsp. alba (White campion).